A 151-amino-acid polypeptide reads, in one-letter code: Large ribosomal subunit protein bL9 (151 aa).

This sequence belongs to the bacterial ribosomal protein bL9 family.

In terms of biological role, binds to the 23S rRNA. This chain is Large ribosomal subunit protein bL9, found in Chlorobium limicola (strain DSM 245 / NBRC 103803 / 6330).